The sequence spans 422 residues: Steroid hormone receptor ERR1 (422 aa).

The tract at residues 1-66 is disordered; that stretch reads MSSQVVGIEP…EGAGSGEQGS (66 aa). Residues 1–76 form a repressor domain region; it reads MSSQVVGIEP…GKLVLSSLPK (76 aa). Residue K14 forms a Glycyl lysine isopeptide (Lys-Gly) (interchain with G-Cter in SUMO) linkage. A phosphoserine mark is found at S19 and S22. A DNA-binding region (nuclear receptor) is located at residues 76–151; the sequence is KRLCLVCGDV…VGMLKEGVRL (76 aa). 2 NR C4-type zinc fingers span residues 79-99 and 115-134; these read CLVC…CEAC and CPAS…CQAC. K129, K138, K160, and K162 each carry N6-acetyllysine; by PCAF/KAT2B. K189 is covalently cross-linked (Glycyl lysine isopeptide (Lys-Gly) (interchain with G-Cter in SUMO2)). The NR LBD domain occupies 192–420; that stretch reads PVNALVSHLL…KLFLEMLEAM (229 aa). Residue K402 forms a Glycyl lysine isopeptide (Lys-Gly) (interchain with G-Cter in SUMO); alternate linkage. A Glycyl lysine isopeptide (Lys-Gly) (interchain with G-Cter in SUMO2); alternate cross-link involves residue K402. Positions 402 to 422 are AF-2 domain; sequence KLEGKVPMHKLFLEMLEAMMD.

It belongs to the nuclear hormone receptor family. NR3 subfamily. As to quaternary structure, binds DNA as a monomer or a homodimer. Interacts (via the AF2 domain) with coactivator PPARGC1A (via the L3 motif); the interaction greatly enhances transcriptional activity of genes involved in energy metabolism. Interacts with PIAS4; the interaction enhances sumoylation. Interacts with MAPK15; promotes re-localization of ESRRA to the cytoplasm through a XPO1-dependent mechanism then inhibits ESRRA transcriptional activity. Phosphorylation on Ser-19 enhances sumoylation on Lys-14 increasing repression of transcriptional activity. Post-translationally, sumoylated with SUMO2. Main site is Lys-14 which is enhanced by phosphorylation on Ser-19, cofactor activation, and by interaction with PIAS4. Sumoylation enhances repression of transcriptional activity, but has no effect on subcellular location nor on DNA binding. In terms of processing, reversibly acetylated. Acetylation by PCAF/KAT2 at Lys-129, Lys-138, Lys-160 and Lys-162 and PCAF/KAT2 decreases transcriptional activity probably by inhibiting DNA-binding activity; deacetylation involves SIRT1 and HDAC8 and increases DNA-binding. As to expression, most highly expressed in kidney, heart, and brown adipocytes. Also found in uterus, cervix and vagina.

It is found in the nucleus. Its subcellular location is the cytoplasm. Binds to an ERR-alpha response element (ERRE) containing a single consensus half-site, 5'-TNAAGGTCA-3'. Can bind to the medium-chain acyl coenzyme A dehydrogenase (MCAD) response element NRRE-1 and may act as an important regulator of MCAD promoter. Binds to the C1 region of the lactoferrin gene promoter. Requires dimerization and the coactivator, PGC-1A, for full activity. The ERRalpha/PGC1alpha complex is a regulator of energy metabolism. Induces the expression of PERM1 in the skeletal muscle. This chain is Steroid hormone receptor ERR1 (Esrra), found in Mus musculus (Mouse).